Here is a 370-residue protein sequence, read N- to C-terminus: F-box/kelch-repeat protein At4g38940 (370 aa).

The F-box domain occupies 18-64; sequence PCLISLLPEEIVVDIVARVPRCYYPTLSQVSRRFRSLVASPEIYKRR. Kelch repeat units follow at residues 131 to 177, 178 to 230, and 263 to 315; these read NIFV…LIDR, KIYV…VIGG, and SACV…SYTG.

As to quaternary structure, part of a SCF (ASK-cullin-F-box) protein ligase complex. Interacts with SKP1A/ASK1, SKP1B/ASK2, ASK11, ASK13 and ASK18.

It is found in the nucleus. It functions in the pathway protein modification; protein ubiquitination. Component of SCF(ASK-cullin-F-box) E3 ubiquitin ligase complexes, which may mediate the ubiquitination and subsequent proteasomal degradation of target proteins. The protein is F-box/kelch-repeat protein At4g38940 of Arabidopsis thaliana (Mouse-ear cress).